The sequence spans 115 residues: Hydrogenase maturation factor HypA (115 aa).

Ni(2+) is bound at residue His2. The Zn(2+) site is built by Cys73, Cys76, Cys89, and Cys92.

Belongs to the HypA/HybF family.

Its function is as follows. Involved in the maturation of [NiFe] hydrogenases. Required for nickel insertion into the metal center of the hydrogenase. The protein is Hydrogenase maturation factor HypA of Shewanella halifaxensis (strain HAW-EB4).